The chain runs to 210 residues: Type III pantothenate kinase (210 aa).

An ATP-binding site is contributed by Asp5–His12. Residues Tyr69 and Gly73–Arg76 each bind substrate. The active-site Proton acceptor is the Asp75. Asp90 is a K(+) binding site. Ser93 contacts ATP. Thr145 serves as a coordination point for substrate.

The protein belongs to the type III pantothenate kinase family. In terms of assembly, homodimer. NH4(+) serves as cofactor. It depends on K(+) as a cofactor.

Its subcellular location is the cytoplasm. It carries out the reaction (R)-pantothenate + ATP = (R)-4'-phosphopantothenate + ADP + H(+). It functions in the pathway cofactor biosynthesis; coenzyme A biosynthesis; CoA from (R)-pantothenate: step 1/5. Catalyzes the phosphorylation of pantothenate (Pan), the first step in CoA biosynthesis. This is Type III pantothenate kinase from Wolinella succinogenes (strain ATCC 29543 / DSM 1740 / CCUG 13145 / JCM 31913 / LMG 7466 / NCTC 11488 / FDC 602W) (Vibrio succinogenes).